The following is a 514-amino-acid chain: Glutamyl-tRNA(Gln) amidotransferase subunit A (514 aa).

Residues Lys-76 and Ser-151 each act as charge relay system in the active site. Ser-175 acts as the Acyl-ester intermediate in catalysis.

The protein belongs to the amidase family. GatA subfamily. In terms of assembly, heterotrimer of A, B and C subunits.

The catalysed reaction is L-glutamyl-tRNA(Gln) + L-glutamine + ATP + H2O = L-glutaminyl-tRNA(Gln) + L-glutamate + ADP + phosphate + H(+). Allows the formation of correctly charged Gln-tRNA(Gln) through the transamidation of misacylated Glu-tRNA(Gln) in organisms which lack glutaminyl-tRNA synthetase. The reaction takes place in the presence of glutamine and ATP through an activated gamma-phospho-Glu-tRNA(Gln). This chain is Glutamyl-tRNA(Gln) amidotransferase subunit A, found in Salinibacter ruber (strain DSM 13855 / M31).